Reading from the N-terminus, the 155-residue chain is Ribosomal RNA large subunit methyltransferase H (155 aa).

Residues Leu-72, Gly-103, and 122-127 contribute to the S-adenosyl-L-methionine site; that span reads LSDLTL.

The protein belongs to the RNA methyltransferase RlmH family. As to quaternary structure, homodimer.

It localises to the cytoplasm. The catalysed reaction is pseudouridine(1915) in 23S rRNA + S-adenosyl-L-methionine = N(3)-methylpseudouridine(1915) in 23S rRNA + S-adenosyl-L-homocysteine + H(+). In terms of biological role, specifically methylates the pseudouridine at position 1915 (m3Psi1915) in 23S rRNA. This is Ribosomal RNA large subunit methyltransferase H from Variovorax paradoxus (strain S110).